The following is a 265-amino-acid chain: MDRKVQVLDFIKINPAGNITILIDNFDIYDKNIPKLSEEIMKETNLYAEQVGFIKDSHLQMMGGEFCGNASRAFASLLAFRDKDFSKQKNYNITCSGESKVLDVDVRNDGAKNKFLAKIKMPKFLSLEEINVDEYKLGLVRFSGINHFIFNIKENKETSFENIIDLVKKYLSNEEYSAFGIMFFDSDNLSMKPYVYVKEVGSGVYENSCASGTTALGYYLKKCKNLDRAKIVQPNGWLEYIIENDEMYIDGPVEIIAEGKIYIGK.

The active-site Proton acceptor is the cysteine 67. Cysteine 209 acts as the Proton donor in catalysis.

It belongs to the histidine racemase family. As to quaternary structure, homodimer.

It carries out the reaction L-histidine = D-histidine. With respect to regulation, activity is not affected by buffer composition (PO(4) or Tris), ions (SO(4)(2-), Mg(2+) and EDTA) or the PLP inhibitor hydroxylamine. However, the activity is hindered by iodoacetamide and Hg(2+), which are known inhibitors of enzymes with catalytic thiols. Its function is as follows. Cofactor-independent isomerase that catalyzes the reversible conversion of L-histidine to D-histidine. Shows weak activity with L,L-lanthionine. The catalytic turnover is 10'000-fold faster with L-histidine than with L,L-lanthionine. May play a role in growth of F.nucleatum. This Fusobacterium nucleatum subsp. nucleatum (strain ATCC 25586 / DSM 15643 / BCRC 10681 / CIP 101130 / JCM 8532 / KCTC 2640 / LMG 13131 / VPI 4355) protein is Histidine racemase.